A 740-amino-acid chain; its full sequence is Ethylene receptor 1 (740 aa).

Helical transmembrane passes span 23–43, 54–74, and 92–112; these read ISDFFIALAYFSIPLELIYFV, VLVQFGAFIVLCGATHLINLW, and VLTAVVSCATALMLVHIIPDL. Residues Cys-65 and His-69 each coordinate Cu cation. The region spanning 158–307 is the GAF domain; the sequence is DRHTILKTTL…VVADQVAVAL (150 aa). The 239-residue stretch at 350–588 folds into the Histidine kinase domain; it reads VMNHEMRTPM…TFIVKLGIAD (239 aa). Position 353 is a phosphohistidine; by autocatalysis (His-353). Residues 614 to 731 form the Response regulatory domain; that stretch reads KVLVMDDNGV…KMRSVLSELI (118 aa). Asp-662 bears the 4-aspartylphosphate mark.

This sequence belongs to the ethylene receptor family. Homodimer; disulfide-linked. Cu cation serves as cofactor. Post-translationally, activation probably requires a transfer of a phosphate group between a His in the transmitter domain and an Asp of the receiver domain. As to expression, in seeds and placenta.

Its subcellular location is the endoplasmic reticulum membrane. It catalyses the reaction ATP + protein L-histidine = ADP + protein N-phospho-L-histidine.. May act early in the ethylene signal transduction pathway, possibly as an ethylene receptor, or as a regulator of the pathway. This is Ethylene receptor 1 (ETR1) from Cucumis melo var. cantalupensis (Netted muskmelon).